A 179-amino-acid chain; its full sequence is Large ribosomal subunit protein uL6 (179 aa).

Belongs to the universal ribosomal protein uL6 family. In terms of assembly, part of the 50S ribosomal subunit.

Functionally, this protein binds to the 23S rRNA, and is important in its secondary structure. It is located near the subunit interface in the base of the L7/L12 stalk, and near the tRNA binding site of the peptidyltransferase center. The polypeptide is Large ribosomal subunit protein uL6 (Prochlorococcus marinus (strain MIT 9211)).